Reading from the N-terminus, the 901-residue chain is Protein translocase subunit SecA (901 aa).

Residues Q87, 105–109 (GEGKT), and D512 each bind ATP. The disordered stretch occupies residues 859-901 (HQDDDSAAAAALAAQTGERKVGRNDPCPCGSGKKYKQCHGRLQ). Positions 885, 887, 896, and 897 each coordinate Zn(2+). The segment covering 891-901 (KKYKQCHGRLQ) has biased composition (basic residues).

This sequence belongs to the SecA family. In terms of assembly, monomer and homodimer. Part of the essential Sec protein translocation apparatus which comprises SecA, SecYEG and auxiliary proteins SecDF-YajC and YidC. Zn(2+) serves as cofactor.

The protein resides in the cell inner membrane. It is found in the cytoplasm. The catalysed reaction is ATP + H2O + cellular proteinSide 1 = ADP + phosphate + cellular proteinSide 2.. Part of the Sec protein translocase complex. Interacts with the SecYEG preprotein conducting channel. Has a central role in coupling the hydrolysis of ATP to the transfer of proteins into and across the cell membrane, serving both as a receptor for the preprotein-SecB complex and as an ATP-driven molecular motor driving the stepwise translocation of polypeptide chains across the membrane. This is Protein translocase subunit SecA from Escherichia coli O139:H28 (strain E24377A / ETEC).